Here is a 406-residue protein sequence, read N- to C-terminus: Putative colanic acid biosynthesis glycosyltransferase WcaL (406 aa).

This sequence belongs to the glycosyltransferase group 1 family. Glycosyltransferase 4 subfamily.

The protein operates within slime biogenesis; slime polysaccharide biosynthesis. The sequence is that of Putative colanic acid biosynthesis glycosyltransferase WcaL (wcaL) from Salmonella typhimurium (strain LT2 / SGSC1412 / ATCC 700720).